The sequence spans 231 residues: Probable septum site-determining protein MinC (231 aa).

The tract at residues 102-125 (KEKAPRPAPAPQAPTQNTTPVTKT) is disordered. The segment covering 114–123 (APTQNTTPVT) has biased composition (low complexity).

The protein belongs to the MinC family. In terms of assembly, interacts with MinD and FtsZ.

In terms of biological role, cell division inhibitor that blocks the formation of polar Z ring septums. Rapidly oscillates between the poles of the cell to destabilize FtsZ filaments that have formed before they mature into polar Z rings. Prevents FtsZ polymerization. The chain is Probable septum site-determining protein MinC from Escherichia coli O45:K1 (strain S88 / ExPEC).